Reading from the N-terminus, the 216-residue chain is LexA repressor (216 aa).

The segment at residues 28–48 (RAEIAAEFGFSSPNAAEEHLR) is a DNA-binding region (H-T-H motif). Residues S134 and K171 each act as for autocatalytic cleavage activity in the active site.

It belongs to the peptidase S24 family. In terms of assembly, homodimer.

It catalyses the reaction Hydrolysis of Ala-|-Gly bond in repressor LexA.. Represses a number of genes involved in the response to DNA damage (SOS response), including recA and lexA. In the presence of single-stranded DNA, RecA interacts with LexA causing an autocatalytic cleavage which disrupts the DNA-binding part of LexA, leading to derepression of the SOS regulon and eventually DNA repair. This Ralstonia pickettii (strain 12J) protein is LexA repressor.